A 359-amino-acid chain; its full sequence is 3-dehydroquinate synthase (359 aa).

NAD(+) is bound by residues 70 to 75 (DGEQYK), 105 to 109 (GVIGD), 129 to 130 (TT), K142, K151, and 169 to 172 (FYKT). Positions 184, 247, and 264 each coordinate Zn(2+).

Belongs to the sugar phosphate cyclases superfamily. Dehydroquinate synthase family. The cofactor is Co(2+). It depends on Zn(2+) as a cofactor. NAD(+) serves as cofactor.

It localises to the cytoplasm. The enzyme catalyses 7-phospho-2-dehydro-3-deoxy-D-arabino-heptonate = 3-dehydroquinate + phosphate. Its pathway is metabolic intermediate biosynthesis; chorismate biosynthesis; chorismate from D-erythrose 4-phosphate and phosphoenolpyruvate: step 2/7. Its function is as follows. Catalyzes the conversion of 3-deoxy-D-arabino-heptulosonate 7-phosphate (DAHP) to dehydroquinate (DHQ). The sequence is that of 3-dehydroquinate synthase from Francisella tularensis subsp. mediasiatica (strain FSC147).